The following is a 784-amino-acid chain: LPS-assembly protein LptD (784 aa).

An N-terminal signal peptide occupies residues 1 to 24 (MKKRIPTLLATMIATALYSQQGLA). 2 disulfides stabilise this stretch: cysteine 31/cysteine 724 and cysteine 173/cysteine 725.

It belongs to the LptD family. In terms of assembly, component of the lipopolysaccharide transport and assembly complex. Interacts with LptE and LptA. Contains two intramolecular disulfide bonds.

It is found in the cell outer membrane. Together with LptE, is involved in the assembly of lipopolysaccharide (LPS) at the surface of the outer membrane. The sequence is that of LPS-assembly protein LptD from Shigella sonnei (strain Ss046).